Here is an 86-residue protein sequence, read N- to C-terminus: RNA-binding protein Hfq (86 aa).

The Sm domain maps to 9–68 (DPYLNTLRKEKVPVSIYLVNGIKLQGSIESFDQFVVLLKNTVSQMVYKHAISTVVPARPV). The disordered stretch occupies residues 66–86 (RPVRLPSPSDSEHGDSEPGNA). Residues 75 to 86 (DSEHGDSEPGNA) show a composition bias toward basic and acidic residues.

This sequence belongs to the Hfq family. In terms of assembly, homohexamer.

In terms of biological role, RNA chaperone that binds small regulatory RNA (sRNAs) and mRNAs to facilitate mRNA translational regulation in response to envelope stress, environmental stress and changes in metabolite concentrations. Also binds with high specificity to tRNAs. In Pseudomonas putida (strain W619), this protein is RNA-binding protein Hfq.